Consider the following 176-residue polypeptide: ATP synthase subunit b (176 aa).

The chain crosses the membrane as a helical span at residues 26-45 (VINLAIIIGVLVYFGRGLLG).

Belongs to the ATPase B chain family. In terms of assembly, F-type ATPases have 2 components, F(1) - the catalytic core - and F(0) - the membrane proton channel. F(1) has five subunits: alpha(3), beta(3), gamma(1), delta(1), epsilon(1). F(0) has four main subunits: a(1), b(1), b'(1) and c(10-14). The alpha and beta chains form an alternating ring which encloses part of the gamma chain. F(1) is attached to F(0) by a central stalk formed by the gamma and epsilon chains, while a peripheral stalk is formed by the delta, b and b' chains.

The protein localises to the cellular thylakoid membrane. F(1)F(0) ATP synthase produces ATP from ADP in the presence of a proton or sodium gradient. F-type ATPases consist of two structural domains, F(1) containing the extramembraneous catalytic core and F(0) containing the membrane proton channel, linked together by a central stalk and a peripheral stalk. During catalysis, ATP synthesis in the catalytic domain of F(1) is coupled via a rotary mechanism of the central stalk subunits to proton translocation. In terms of biological role, component of the F(0) channel, it forms part of the peripheral stalk, linking F(1) to F(0). The chain is ATP synthase subunit b from Synechococcus sp. (strain PCC 6716).